The following is a 559-amino-acid chain: Oxygen-dependent choline dehydrogenase (559 aa).

An FAD-binding site is contributed by 4–33; it reads DYIIIGAGSAGNVLATRLTEESDVSVLLLE. The segment at 182 to 201 is disordered; sequence EGFGPMDRTVTPKGRRASTA. Catalysis depends on His-471, which acts as the Proton acceptor.

This sequence belongs to the GMC oxidoreductase family. FAD is required as a cofactor.

It catalyses the reaction choline + A = betaine aldehyde + AH2. It carries out the reaction betaine aldehyde + NAD(+) + H2O = glycine betaine + NADH + 2 H(+). Its pathway is amine and polyamine biosynthesis; betaine biosynthesis via choline pathway; betaine aldehyde from choline (cytochrome c reductase route): step 1/1. Involved in the biosynthesis of the osmoprotectant glycine betaine. Catalyzes the oxidation of choline to betaine aldehyde and betaine aldehyde to glycine betaine at the same rate. In Pectobacterium carotovorum subsp. carotovorum (strain PC1), this protein is Oxygen-dependent choline dehydrogenase.